Here is a 320-residue protein sequence, read N- to C-terminus: Phospho-N-acetylmuramoyl-pentapeptide-transferase (320 aa).

Transmembrane regions (helical) follow at residues 6–26, 54–74, 81–101, 117–137, 145–165, 175–195, 200–220, 226–246, 251–271, and 300–320; these read FLTP…LFIG, MGGL…AIWL, LWIA…DDFI, LAGQ…EGFS, IGTI…LVGF, IDGL…IIAF, IDVA…LIFN, IFMG…MSIL, FSLL…MLQV, and RIDI…LLIF.

It belongs to the glycosyltransferase 4 family. MraY subfamily. Mg(2+) is required as a cofactor.

The protein resides in the cell membrane. It catalyses the reaction UDP-N-acetyl-alpha-D-muramoyl-L-alanyl-gamma-D-glutamyl-L-lysyl-D-alanyl-D-alanine + di-trans,octa-cis-undecaprenyl phosphate = Mur2Ac(oyl-L-Ala-gamma-D-Glu-L-Lys-D-Ala-D-Ala)-di-trans,octa-cis-undecaprenyl diphosphate + UMP. It functions in the pathway cell wall biogenesis; peptidoglycan biosynthesis. In terms of biological role, catalyzes the initial step of the lipid cycle reactions in the biosynthesis of the cell wall peptidoglycan: transfers peptidoglycan precursor phospho-MurNAc-pentapeptide from UDP-MurNAc-pentapeptide onto the lipid carrier undecaprenyl phosphate, yielding undecaprenyl-pyrophosphoryl-MurNAc-pentapeptide, known as lipid I. This Latilactobacillus sakei subsp. sakei (strain 23K) (Lactobacillus sakei subsp. sakei) protein is Phospho-N-acetylmuramoyl-pentapeptide-transferase.